Reading from the N-terminus, the 338-residue chain is MKVFYDKDCDLSLIKGKTVAIIGYGSQGHAHAQNLNDSGVKVVVGLRKGGASWTKVEKAGLKVAEVADAVKAADVVMILLPDEHIAAVYTEDIEPNIKQGASLVFAHGFNVHYGLVTPRADLDVWMVAPKAPGHTVRGTYVQGGGVPQLIAIHQDKSGRTRDLALSYAMANGGGKAGIIETTFREETETDLFGEQAVLCGGTVELIKAGFETLVEAGYAPEMAYFECLHELKLIVDMIYEGGIANMNYSISNNAEYGEYVTGPKIITSASKDAMRQCLKDIQTGEYAKSFILENKAGAPTLLSRRRLTSEHQIEQVGEKLRAMMPWIKKNKLVDQTRN.

Residues 1–181 (MKVFYDKDCD…GGGKAGIIET (181 aa)) enclose the KARI N-terminal Rossmann domain. Residues 24-27 (YGSQ), Arg-47, and Ser-52 contribute to the NADP(+) site. The active site involves His-107. Gly-133 lines the NADP(+) pocket. The region spanning 182-327 (TFREETETDL…EKLRAMMPWI (146 aa)) is the KARI C-terminal knotted domain. 4 residues coordinate Mg(2+): Asp-190, Glu-194, Glu-226, and Glu-230. Position 251 (Ser-251) interacts with substrate.

Belongs to the ketol-acid reductoisomerase family. It depends on Mg(2+) as a cofactor.

The enzyme catalyses (2R)-2,3-dihydroxy-3-methylbutanoate + NADP(+) = (2S)-2-acetolactate + NADPH + H(+). It catalyses the reaction (2R,3R)-2,3-dihydroxy-3-methylpentanoate + NADP(+) = (S)-2-ethyl-2-hydroxy-3-oxobutanoate + NADPH + H(+). The protein operates within amino-acid biosynthesis; L-isoleucine biosynthesis; L-isoleucine from 2-oxobutanoate: step 2/4. It functions in the pathway amino-acid biosynthesis; L-valine biosynthesis; L-valine from pyruvate: step 2/4. Its function is as follows. Involved in the biosynthesis of branched-chain amino acids (BCAA). Catalyzes an alkyl-migration followed by a ketol-acid reduction of (S)-2-acetolactate (S2AL) to yield (R)-2,3-dihydroxy-isovalerate. In the isomerase reaction, S2AL is rearranged via a Mg-dependent methyl migration to produce 3-hydroxy-3-methyl-2-ketobutyrate (HMKB). In the reductase reaction, this 2-ketoacid undergoes a metal-dependent reduction by NADPH to yield (R)-2,3-dihydroxy-isovalerate. The chain is Ketol-acid reductoisomerase (NADP(+)) from Albidiferax ferrireducens (strain ATCC BAA-621 / DSM 15236 / T118) (Rhodoferax ferrireducens).